Reading from the N-terminus, the 466-residue chain is MNQGKIVQIIGAIVDVEFPRNNVPKVYNALKIDGTAIILEVQQQLGDGIVRTIALGSTDGLKRNLIATDTGHAITVPVGTGTLGRIMDVLGNPIDEAGPITYTDQWEIHRNAPSYEDQASTTELLETGIKVIDLMCPFAKGGKVGLFGGAGVGKTVNMMELINNIAKAHSGLSVFAGVGERTREGNDFYHEMKDSNVLDKVAMVYGQMNEPPGNRLRVALTGLTIAEYFRDEKDSSGKGKDVLLFIDNIYRYTLAGTEVSALLGRMPSAVGYQPTLAEEMGVLQERITSTANGSITSIQAVYVPADDLTDPSPATTFGHLDSTVTLSRSIAALGIYPAVDPLDSSSRQMDPLIIGEEHYNTTQRVQQTLQKYKDLKDIIAILGMDELSEDDKLAVSRARKIERFFSQPFHVAEVFTGAPGKYVPLKETIRGFKAIVDGEYDHLPEQAFYMVGNIEEVIEKANKMTA.

148-155 (GGAGVGKT) contacts ATP.

Belongs to the ATPase alpha/beta chains family. F-type ATPases have 2 components, CF(1) - the catalytic core - and CF(0) - the membrane proton channel. CF(1) has five subunits: alpha(3), beta(3), gamma(1), delta(1), epsilon(1). CF(0) has three main subunits: a(1), b(2) and c(9-12). The alpha and beta chains form an alternating ring which encloses part of the gamma chain. CF(1) is attached to CF(0) by a central stalk formed by the gamma and epsilon chains, while a peripheral stalk is formed by the delta and b chains.

It localises to the cell inner membrane. It carries out the reaction ATP + H2O + 4 H(+)(in) = ADP + phosphate + 5 H(+)(out). Its function is as follows. Produces ATP from ADP in the presence of a proton gradient across the membrane. The catalytic sites are hosted primarily by the beta subunits. This Xylella fastidiosa (strain M12) protein is ATP synthase subunit beta.